A 710-amino-acid polypeptide reads, in one-letter code: Chaperonin-containing T-complex member BBS12 (710 aa).

Belongs to the TCP-1 chaperonin family. BBS12 subfamily. Component of the chaperonin-containing T-complex (TRiC), a heterooligomeric complex of about 850 to 900 kDa that forms two stacked rings, 12 to 16 nm in diameter. Interacts with MKKS.

It is found in the cell projection. Its subcellular location is the cilium. In terms of biological role, component of the chaperonin-containing T-complex (TRiC), a molecular chaperone complex that assists the folding of proteins upon ATP hydrolysis. As part of the TRiC complex may play a role in the assembly of BBSome, a complex involved in ciliogenesis regulating transports vesicles to the cilia. Involved in adipogenic differentiation. This Pongo abelii (Sumatran orangutan) protein is Chaperonin-containing T-complex member BBS12 (BBS12).